We begin with the raw amino-acid sequence, 274 residues long: MAAGFFQAEMSILSSTLARSYSLPIRKTLMTFDFRIAMQRNPCLRIRRSCVAAFSSTPSHSRNFPIRGLEDVFVGYLFGRKKATEVAHVVWEQVIQKGDTVIDATCGNGNDTLAMLKMVMHDSVGCGGYVYAMDIQKDAIESTSSLLDQAVGSKEKECVKLFNLCHSKMGEIVPENARVRMVAFNLGYLPGGNKSIITLSDTTLSALKAAERILKPGGLISLVVYIGHPGGREELEVVEAFGSGLPVSDWICCKFQMLNRPLAPVLVFMFKREN.

The transit peptide at 1-50 (MAAGFFQAEMSILSSTLARSYSLPIRKTLMTFDFRIAMQRNPCLRIRRSC) directs the protein to the chloroplast. 5 residues coordinate S-adenosyl-L-methionine: N108, N110, D134, Q136, and H166.

This sequence belongs to the methyltransferase superfamily. MnmM family.

It is found in the plastid. The protein localises to the chloroplast. It carries out the reaction 5-aminomethyl-2-thiouridine(34) in tRNA + S-adenosyl-L-methionine = 5-methylaminomethyl-2-thiouridine(34) in tRNA + S-adenosyl-L-homocysteine + H(+). Its pathway is tRNA modification. Involved in the biosynthesis of 5-methylaminomethyl-2-thiouridine (mnm(5)s(2)U) at the wobble position (U34) in tRNA. Catalyzes the transfer of a methyl group from S-adenosyl-L-methionine to nm(5)s(2)U34 to form mnm(5)s(2)U34. The polypeptide is tRNA (mnm(5)s(2)U34)-methyltransferase, chloroplastic (Arabidopsis thaliana (Mouse-ear cress)).